A 98-amino-acid chain; its full sequence is NADH-ubiquinone oxidoreductase chain 4L (98 aa).

The next 3 membrane-spanning stretches (helical) occupy residues 2–22 (TQAS…TLIF), 29–49 (TLLC…MTAL), and 61–81 (IVML…LAMI).

This sequence belongs to the complex I subunit 4L family. Core subunit of respiratory chain NADH dehydrogenase (Complex I) which is composed of 45 different subunits.

The protein localises to the mitochondrion inner membrane. The catalysed reaction is a ubiquinone + NADH + 5 H(+)(in) = a ubiquinol + NAD(+) + 4 H(+)(out). Functionally, core subunit of the mitochondrial membrane respiratory chain NADH dehydrogenase (Complex I) which catalyzes electron transfer from NADH through the respiratory chain, using ubiquinone as an electron acceptor. Part of the enzyme membrane arm which is embedded in the lipid bilayer and involved in proton translocation. The sequence is that of NADH-ubiquinone oxidoreductase chain 4L (MT-ND4L) from Calomys musculinus (Drylands vesper mouse).